We begin with the raw amino-acid sequence, 167 residues long: Leptin (167 aa).

An N-terminal signal peptide occupies residues 1-21 (MCWRPLCRFLWLWSYLSYVQA). A disulfide bridge links Cys117 with Cys167.

The protein belongs to the leptin family.

The protein localises to the secreted. Its function is as follows. Key player in the regulation of energy balance and body weight control. Once released into the circulation, has central and peripheral effects by binding LEPR, found in many tissues, which results in the activation of several major signaling pathways. In the hypothalamus, acts as an appetite-regulating factor that induces a decrease in food intake and an increase in energy consumption by inducing anorexinogenic factors and suppressing orexigenic neuropeptides, also regulates bone mass and secretion of hypothalamo-pituitary-adrenal hormones. In the periphery, increases basal metabolism, influences reproductive function, regulates pancreatic beta-cell function and insulin secretion, is pro-angiogenic for endothelial cell and affects innate and adaptive immunity. In the arcuate nucleus of the hypothalamus, activates by depolarization POMC neurons inducing FOS and SOCS3 expression to release anorexigenic peptides and inhibits by hyperpolarization NPY neurons inducing SOCS3 with a consequent reduction on release of orexigenic peptides. In addition to its known satiety inducing effect, has a modulatory role in nutrient absorption. In the intestine, reduces glucose absorption by enterocytes by activating PKC and leading to a sequential activation of p38, PI3K and ERK signaling pathways which exerts an inhibitory effect on glucose absorption. Acts as a growth factor on certain tissues, through the activation of different signaling pathways increases expression of genes involved in cell cycle regulation such as CCND1, via JAK2-STAT3 pathway, or VEGFA, via MAPK1/3 and PI3K-AKT1 pathways. May also play an apoptotic role via JAK2-STAT3 pathway and up-regulation of BIRC5 expression. Pro-angiogenic, has mitogenic activity on vascular endothelial cells and plays a role in matrix remodeling by regulating the expression of matrix metalloproteinases (MMPs) and tissue inhibitors of metalloproteinases (TIMPs). In innate immunity, modulates the activity and function of neutrophils by increasing chemotaxis and the secretion of oxygen radicals. Increases phagocytosis by macrophages and enhances secretion of pro-inflammatory mediators. Increases cytotoxic ability of NK cells. Plays a pro-inflammatory role, in synergy with IL1B, by inducing NOS2 which promotes the production of IL6, IL8 and Prostaglandin E2, through a signaling pathway that involves JAK2, PI3K, MAP2K1/MEK1 and MAPK14/p38. In adaptive immunity, promotes the switch of memory T-cells towards T helper-1 cell immune responses. Increases CD4(+)CD25(-) T-cell proliferation and reduces autophagy during TCR (T-cell receptor) stimulation, through MTOR signaling pathway activation and BCL2 up-regulation. This chain is Leptin (Lep), found in Rattus norvegicus (Rat).